The following is a 1342-amino-acid chain: MVYSYTEKKRIRKDFGKRPQVLDVPYLLSIQLDSFQKFIEQDPEGQYGLEAAFRSVFPIQSYSGNSELQYVSYRLGEPVFDVQECQIRGVTYSAPLRVKLRLVIYEREAPEGTVKDIKEQEVYMGEIPLMTDNGTFVINGTERVIVSQLHRSPGVFFDSDKGKTHSSGKVLYNARIIPYRGSWLDFEFDLKDNLFVRIDRRRKLPATIILRALNYTTEQILDLFFEKVVFEIRDNKLQMELIPERLRGETASFDIEANGKVYVEKGRRITARHIRQLEKDDIKHIEVPVEYIAGKVVSKDYVDESTGELICAANMELSLDLLAKLSQSGHKRIETLFTNDLDHGPYISETVRVDPTNDRLSALVEIYRMMRPGEPPTREAAESLFENLFFSEDRYDLSAVGRMKFNRSLLRDEIEGSGILSKDDIIDVMKKLIDIRNGKGEVDDIDHLGNRRIRSVGEMAENQFRVGLVRVERAVKERLSLGDLDTLMPQDMINAKPISAAVKEFFGSSQLSQFMDQNNPLSEITHKRRISALGPGGLTRERAGFEVRDVHPTHYGRVCPIETPEGPNIGLINSLSVYAQTNEYGFLETPYRRVVDGVVTDEIHYLSAIEEGNYVIAQANSNLDDEGHFVEDLVTCRSKGESSLFSRDQVDYMDVSTQQVVSVGASLIPFLEHDDANRALMGANMQRQAVPTLRADKPLVGTGMERAVAVDSGVTAVAKRGGTVQYVDASRIVIKVNEDEMYPGEAGIDIYNLTKYTRSNQNTCINQMPCVSLGEPVERGDVLADGPSTDLGELALGQNMRVAFMPWNGYNFEDSILVSERVVQEDRFTTIHIQELACVSRDTKLGPEEITADIPNVGEAALSKLDESGIVYIGAEVTGGDILVGKVTPKGETQLTPEEKLLRAIFGEKASDVKDSSLRVPNGVSGTVIDVQVFTRDGVEKDKRALEIEEMQLKQAKKDLSEELQILEAGLFSRIRAVLVSGGVEAEKLDKLPRDRWLELGLTDEEKQNQLEQLAEQYDELKHEFEKKLEAKRRKITQGDDLAPGVLKIVKVYLAVKRRIQPGDKMAGRHGNKGVISKINPIEDMPYDENGTPVDIVLNPLGVPSRMNIGQILETHLGMAAKGIGDKINAMLKQQQEVAKLREFIQRAYDLGADVRQKVDLSTFSDDEVLRLAENLRKGMPIATPVFDGAKEAEIKELLKLGDLPTSGQITLFDGRTGEQFERPVTVGYMYMLKLNHLVDDKMHARSTGSYSLVTQQPLGGKAQFGGQRFGEMEVWALEAYGAAYTLQEMLTVKSDDVNGRTKMYKNIVDGNHQMEPGMPESFNVLLKEIRSLGINIELEDE.

The protein belongs to the RNA polymerase beta chain family. As to quaternary structure, the RNAP catalytic core consists of 2 alpha, 1 beta, 1 beta' and 1 omega subunit. When a sigma factor is associated with the core the holoenzyme is formed, which can initiate transcription.

It catalyses the reaction RNA(n) + a ribonucleoside 5'-triphosphate = RNA(n+1) + diphosphate. DNA-dependent RNA polymerase catalyzes the transcription of DNA into RNA using the four ribonucleoside triphosphates as substrates. This chain is DNA-directed RNA polymerase subunit beta, found in Salmonella choleraesuis (strain SC-B67).